The sequence spans 294 residues: ATP synthase gamma chain (294 aa).

The protein belongs to the ATPase gamma chain family. F-type ATPases have 2 components, CF(1) - the catalytic core - and CF(0) - the membrane proton channel. CF(1) has five subunits: alpha(3), beta(3), gamma(1), delta(1), epsilon(1). CF(0) has three main subunits: a, b and c.

It is found in the cell inner membrane. Its function is as follows. Produces ATP from ADP in the presence of a proton gradient across the membrane. The gamma chain is believed to be important in regulating ATPase activity and the flow of protons through the CF(0) complex. This chain is ATP synthase gamma chain, found in Nitrosomonas eutropha (strain DSM 101675 / C91 / Nm57).